Here is a 381-residue protein sequence, read N- to C-terminus: Endolytic peptidoglycan transglycosylase RlpA (381 aa).

The signal sequence occupies residues 1–19 (MRKQLPVICVAAGIVLLAA). A lipid anchor (N-palmitoyl cysteine) is attached at Cys20. Cys20 is lipidated: S-diacylglycerol cysteine. A disordered region spans residues 196-274 (LPPRPDLSGG…QPAPVSAPVA (79 aa)). The span at 208–218 (SASSAPAQPQG) shows a compositional bias: low complexity. The SPOR domain occupies 304–380 (AAASGRFVVQ…AQLQSFIASA (77 aa)).

Belongs to the RlpA family.

It is found in the cell membrane. Lytic transglycosylase with a strong preference for naked glycan strands that lack stem peptides. In Salmonella typhimurium (strain LT2 / SGSC1412 / ATCC 700720), this protein is Endolytic peptidoglycan transglycosylase RlpA.